Here is a 348-residue protein sequence, read N- to C-terminus: Thioesterase-like protein TwmA (348 aa).

It functions in the pathway secondary metabolite biosynthesis. Its function is as follows. Thioesterase-like protein; part of the gene cluster that mediates the biosynthesis of wortmanamides A and B, reduced long-chain polyketides amidated with a specific omega-amino acid, 5-aminopentanoic acid (5PA). The PKS modules of TwmB are involved in the synthesis of the polyketide backbone, whereas the non-canonical C domain of TwmB is a bonafide condensation domain that specifically selects 5PA and catalyzes amidation to release polyketide chain. The C domain clearly prefers C16 and C18 fatty acyl substrates, which is consistent with simultaneous formation of both octaketide and nonaketide acyl amides wortmanamides A and B. Because TwmB lacks a designated enoylreductase (ER) domain, the required activity is provided the enoyl reductase TwmE. The roles of the remaining enzymes have still to be clarified. In Talaromyces wortmannii (Penicillium wortmannii), this protein is Thioesterase-like protein TwmA.